A 911-amino-acid chain; its full sequence is Valine--tRNA ligase (911 aa).

Positions 57–67 (PTVSGSLHVGH) match the 'HIGH' region motif. Residues 599-603 (KMSKS) carry the 'KMSKS' region motif. An ATP-binding site is contributed by K602. The tract at residues 882–911 (EESAAEGTPETEVAVEASELGEPPAKKPKH) is disordered.

This sequence belongs to the class-I aminoacyl-tRNA synthetase family. ValS type 2 subfamily. Monomer.

Its subcellular location is the cytoplasm. The catalysed reaction is tRNA(Val) + L-valine + ATP = L-valyl-tRNA(Val) + AMP + diphosphate. Functionally, catalyzes the attachment of valine to tRNA(Val). As ValRS can inadvertently accommodate and process structurally similar amino acids such as threonine, to avoid such errors, it has a 'posttransfer' editing activity that hydrolyzes mischarged Thr-tRNA(Val) in a tRNA-dependent manner. The sequence is that of Valine--tRNA ligase from Bifidobacterium longum (strain NCC 2705).